The following is a 92-amino-acid chain: MPKLEMMLLVLLILPLSYFSAAGGQVVQGDLHSDVLARYLQRGDRDARECQVNTPGSRWGKCCLNRMCGPMCCPESHCYCIYHRRRGHGCSC.

The first 24 residues, 1–24 (MPKLEMMLLVLLILPLSYFSAAGG), serve as a signal peptide directing secretion. The propeptide occupies 25–45 (QVVQGDLHSDVLARYLQRGDR). Position 49 is a 4-carboxyglutamate (Glu49). Residue Pro55 is modified to 4-hydroxyproline. Disulfide bonds link Cys63-Cys72, Cys68-Cys80, Cys73-Cys90, and Cys78-Cys92.

This sequence belongs to the conotoxin D superfamily. In terms of assembly, hetero-, homo- or pseudo-homodimer (identical sequence, different post-translational modifications). In terms of tissue distribution, expressed by the venom duct.

It localises to the secreted. Alpha-conotoxins act on postsynaptic membranes, they bind to the nicotinic acetylcholine receptors (nAChR) and thus inhibit them. Through its two C-terminal domains, this homodimeric protein would bind to two nAChR allosteric sites, located outside the nAChR C-loop of the principal binding face and at the adjacent binding interface in a clockwise direction. This toxin specifically blocks mammalian neuronal nAChR of the alpha-7/CHRNA7, alpha-3-beta-2/CHRNA3-CHRNB2 and alpha-4-beta-2/CHRNA4-CHRNB2 subtypes. This is Alpha-conotoxin-like Rt20.2 from Conus rattus (Rat cone).